Here is a 659-residue protein sequence, read N- to C-terminus: Fructose-1,6-bisphosphatase class 3 (659 aa).

Belongs to the FBPase class 3 family. Requires Mn(2+) as cofactor.

The catalysed reaction is beta-D-fructose 1,6-bisphosphate + H2O = beta-D-fructose 6-phosphate + phosphate. It participates in carbohydrate biosynthesis; gluconeogenesis. The sequence is that of Fructose-1,6-bisphosphatase class 3 from Clostridium botulinum (strain Alaska E43 / Type E3).